A 310-amino-acid polypeptide reads, in one-letter code: Thioredoxin reductase (310 aa).

Residue Asn-34–Gln-41 participates in FAD binding. Residues Cys-135 and Cys-138 are joined by a disulfide bond. FAD is bound at residue Asp-281–Ala-290.

The protein belongs to the class-II pyridine nucleotide-disulfide oxidoreductase family. As to quaternary structure, homodimer. FAD is required as a cofactor.

The protein resides in the cytoplasm. It catalyses the reaction [thioredoxin]-dithiol + NADP(+) = [thioredoxin]-disulfide + NADPH + H(+). This is Thioredoxin reductase (trxB) from Rickettsia conorii (strain ATCC VR-613 / Malish 7).